A 575-amino-acid polypeptide reads, in one-letter code: Muellerian-inhibiting factor (575 aa).

An N-terminal signal peptide occupies residues 1-24; it reads MPGPSLSLALVLSAMGALLRPGTP. Residues 25 to 466 constitute a propeptide that is removed on maturation; the sequence is REEVFSTSAL…ERSGSARAQR (442 aa). N-linked (GlcNAc...) asparagine glycans are attached at residues Asn78 and Asn344. Intrachain disulfides connect Cys477-Cys541, Cys503-Cys572, and Cys507-Cys574.

The protein belongs to the TGF-beta family. As to quaternary structure, homodimer; disulfide-linked. Post-translationally, preproprotein is proteolytically processed to generate N- and C-terminal cleavage products that homodimerize and associate to form a biologically active non-covalent complex. Binding of the non-covalent complex to AMHR2 induces dissociation of the pro-region from the mature C-terminal dimer. The N-terminal portion of the protein, despite having no intrinsic activity, has the role of amplifying the activity of the C-terminus. In terms of tissue distribution, expressed in fetal testis and adult ovaries.

It is found in the secreted. Functionally, plays an important role in several reproductive functions. Induces Muellerian duct regression during male fetal sexual differentiation and plays a role in Leydig cell differentiation and function. In female acts as a negative regulator of the primordial to primary follicle transition and decreases FSH sensitivity of growing follicles. AMH signals by binding to a specific type-II receptor, AMHR2, that heterodimerizes with type-I receptors (ACVR1 and BMPR1A), and recruiting SMAD proteins that are translocated to the nucleus to regulate target gene expression. The chain is Muellerian-inhibiting factor (AMH) from Bos taurus (Bovine).